The sequence spans 415 residues: Serine--tRNA ligase (415 aa).

231–233 contacts L-serine; the sequence is TAE. 262–264 is an ATP binding site; it reads RSE. Position 285 (Glu-285) interacts with L-serine. 349-352 contacts ATP; that stretch reads EISS. Ser-383 lines the L-serine pocket.

It belongs to the class-II aminoacyl-tRNA synthetase family. Type-1 seryl-tRNA synthetase subfamily. As to quaternary structure, homodimer. The tRNA molecule binds across the dimer.

It localises to the cytoplasm. The enzyme catalyses tRNA(Ser) + L-serine + ATP = L-seryl-tRNA(Ser) + AMP + diphosphate + H(+). It catalyses the reaction tRNA(Sec) + L-serine + ATP = L-seryl-tRNA(Sec) + AMP + diphosphate + H(+). It functions in the pathway aminoacyl-tRNA biosynthesis; selenocysteinyl-tRNA(Sec) biosynthesis; L-seryl-tRNA(Sec) from L-serine and tRNA(Sec): step 1/1. Catalyzes the attachment of serine to tRNA(Ser). Is also able to aminoacylate tRNA(Sec) with serine, to form the misacylated tRNA L-seryl-tRNA(Sec), which will be further converted into selenocysteinyl-tRNA(Sec). The sequence is that of Serine--tRNA ligase from Helicobacter pylori (strain ATCC 700392 / 26695) (Campylobacter pylori).